We begin with the raw amino-acid sequence, 244 residues long: 1-(5-phosphoribosyl)-5-[(5-phosphoribosylamino)methylideneamino] imidazole-4-carboxamide isomerase (244 aa).

Residue D13 is the Proton acceptor of the active site. Catalysis depends on D132, which acts as the Proton donor.

It belongs to the HisA/HisF family.

The protein localises to the cytoplasm. It carries out the reaction 1-(5-phospho-beta-D-ribosyl)-5-[(5-phospho-beta-D-ribosylamino)methylideneamino]imidazole-4-carboxamide = 5-[(5-phospho-1-deoxy-D-ribulos-1-ylimino)methylamino]-1-(5-phospho-beta-D-ribosyl)imidazole-4-carboxamide. The protein operates within amino-acid biosynthesis; L-histidine biosynthesis; L-histidine from 5-phospho-alpha-D-ribose 1-diphosphate: step 4/9. The chain is 1-(5-phosphoribosyl)-5-[(5-phosphoribosylamino)methylideneamino] imidazole-4-carboxamide isomerase from Renibacterium salmoninarum (strain ATCC 33209 / DSM 20767 / JCM 11484 / NBRC 15589 / NCIMB 2235).